A 393-amino-acid polypeptide reads, in one-letter code: Branched-chain-amino-acid aminotransferase, mitochondrial (393 aa).

Residues 1-27 (MAAATLGQVWARKLLPVPWLLCGSKRC) constitute a mitochondrion transit peptide. Tyr169 lines the substrate pocket. Lys230 bears the N6-(pyridoxal phosphate)lysine mark. An N6-acetyllysine modification is found at Lys322.

Belongs to the class-IV pyridoxal-phosphate-dependent aminotransferase family. Homodimer. The cofactor is pyridoxal 5'-phosphate.

The protein resides in the mitochondrion. It catalyses the reaction L-leucine + 2-oxoglutarate = 4-methyl-2-oxopentanoate + L-glutamate. The enzyme catalyses L-isoleucine + 2-oxoglutarate = (S)-3-methyl-2-oxopentanoate + L-glutamate. The catalysed reaction is L-valine + 2-oxoglutarate = 3-methyl-2-oxobutanoate + L-glutamate. Its function is as follows. Catalyzes the first reaction in the catabolism of the essential branched chain amino acids leucine, isoleucine, and valine. May also function as a transporter of branched chain alpha-keto acids. The protein is Branched-chain-amino-acid aminotransferase, mitochondrial (Bcat2) of Mus musculus (Mouse).